The primary structure comprises 90 residues: Small ribosomal subunit protein uS17 (90 aa).

This sequence belongs to the universal ribosomal protein uS17 family. Part of the 30S ribosomal subunit.

Its function is as follows. One of the primary rRNA binding proteins, it binds specifically to the 5'-end of 16S ribosomal RNA. This is Small ribosomal subunit protein uS17 from Cutibacterium acnes (strain DSM 16379 / KPA171202) (Propionibacterium acnes).